The chain runs to 365 residues: Aminomethyltransferase (365 aa).

It belongs to the GcvT family. In terms of assembly, the glycine cleavage system is composed of four proteins: P, T, L and H.

The enzyme catalyses N(6)-[(R)-S(8)-aminomethyldihydrolipoyl]-L-lysyl-[protein] + (6S)-5,6,7,8-tetrahydrofolate = N(6)-[(R)-dihydrolipoyl]-L-lysyl-[protein] + (6R)-5,10-methylene-5,6,7,8-tetrahydrofolate + NH4(+). Functionally, the glycine cleavage system catalyzes the degradation of glycine. In Chlorobaculum tepidum (strain ATCC 49652 / DSM 12025 / NBRC 103806 / TLS) (Chlorobium tepidum), this protein is Aminomethyltransferase.